We begin with the raw amino-acid sequence, 171 residues long: 3-hydroxydecanoyl-[acyl-carrier-protein] dehydratase (171 aa).

H70 is an active-site residue.

The protein belongs to the thioester dehydratase family. FabA subfamily. Homodimer.

It is found in the cytoplasm. The enzyme catalyses a (3R)-hydroxyacyl-[ACP] = a (2E)-enoyl-[ACP] + H2O. It catalyses the reaction (3R)-hydroxydecanoyl-[ACP] = (2E)-decenoyl-[ACP] + H2O. The catalysed reaction is (2E)-decenoyl-[ACP] = (3Z)-decenoyl-[ACP]. It functions in the pathway lipid metabolism; fatty acid biosynthesis. In terms of biological role, necessary for the introduction of cis unsaturation into fatty acids. Catalyzes the dehydration of (3R)-3-hydroxydecanoyl-ACP to E-(2)-decenoyl-ACP and then its isomerization to Z-(3)-decenoyl-ACP. Can catalyze the dehydratase reaction for beta-hydroxyacyl-ACPs with saturated chain lengths up to 16:0, being most active on intermediate chain length. The chain is 3-hydroxydecanoyl-[acyl-carrier-protein] dehydratase from Ectopseudomonas mendocina (strain ymp) (Pseudomonas mendocina).